The primary structure comprises 335 residues: Zinc-type alcohol dehydrogenase-like protein SAS2087 (335 aa).

It belongs to the zinc-containing alcohol dehydrogenase family. Quinone oxidoreductase subfamily.

The chain is Zinc-type alcohol dehydrogenase-like protein SAS2087 from Staphylococcus aureus (strain MSSA476).